The following is a 130-amino-acid chain: Small ribosomal subunit protein uS8 (130 aa).

Belongs to the universal ribosomal protein uS8 family. As to quaternary structure, part of the 30S ribosomal subunit. Contacts proteins S5 and S12.

Functionally, one of the primary rRNA binding proteins, it binds directly to 16S rRNA central domain where it helps coordinate assembly of the platform of the 30S subunit. In Buchnera aphidicola subsp. Acyrthosiphon pisum (strain 5A), this protein is Small ribosomal subunit protein uS8.